The chain runs to 289 residues: MELLCCEVDPVRRAVPDRNLLEDRVLQNLLTIEERYLPQCSYFKCVQKDIQPYMRRMVATWMLEVCEEQKCEEEVFPLAMNYLDRFLAGVPTPKTHLQLLGAVCMFLASKLKETIPLTAEKLCIYTDNSVKPQELLEWELVVLGKLKWNLAAVTPHDFIEHILRKLPQQKEKLSLIRKHAQTFIALCATDFKFAMYPPSMIATGSVGAAICGLQQDDEVNTLTCDALTELLAKITHTDVDCLKACQEQIEALLLNSLQQFRQEQHNAGSKSVEDPDQATTPTDVRDVDL.

One can recognise a Cyclin N-terminal domain in the interval 26–151 (LQNLLTIEER…VLGKLKWNLA (126 aa)). Residues 264-289 (QHNAGSKSVEDPDQATTPTDVRDVDL) form a disordered region. Serine 271 is subject to Phosphoserine. The residue at position 280 (threonine 280) is a Phosphothreonine.

The protein belongs to the cyclin family. Cyclin D subfamily. As to quaternary structure, interacts with either CDK4 or CDK6 protein kinase to form a serine/threonine kinase holoenzyme complex. The cyclin subunit imparts substrate specificity to the complex. In terms of processing, phosphorylation at Thr-280 by MAP kinases is required for ubiquitination and degradation by the DCX(AMBRA1) complex. Post-translationally, ubiquitinated by the DCX(AMBRA1) complex during the transition from G1 to S cell phase, leading to its degradation: ubiquitination is dependent on Thr-280 phosphorylation. The DCX(AMBRA1) complex represents the major regulator of CCND2 stability during the G1/S transition. Polyubiquitinated by the SCF(FBXL2) complex, leading to proteasomal degradation.

It is found in the nucleus. It localises to the cytoplasm. The protein resides in the nucleus membrane. In terms of biological role, regulatory component of the cyclin D2-CDK4 (DC) complex that phosphorylates and inhibits members of the retinoblastoma (RB) protein family including RB1 and regulates the cell-cycle during G(1)/S transition. Phosphorylation of RB1 allows dissociation of the transcription factor E2F from the RB/E2F complex and the subsequent transcription of E2F target genes which are responsible for the progression through the G(1) phase. Hypophosphorylates RB1 in early G(1) phase. Cyclin D-CDK4 complexes are major integrators of various mitogenenic and antimitogenic signals. This Mus musculus (Mouse) protein is G1/S-specific cyclin-D2.